A 201-amino-acid polypeptide reads, in one-letter code: 3-isopropylmalate dehydratase small subunit (201 aa).

It belongs to the LeuD family. LeuD type 1 subfamily. Heterodimer of LeuC and LeuD.

It catalyses the reaction (2R,3S)-3-isopropylmalate = (2S)-2-isopropylmalate. It participates in amino-acid biosynthesis; L-leucine biosynthesis; L-leucine from 3-methyl-2-oxobutanoate: step 2/4. In terms of biological role, catalyzes the isomerization between 2-isopropylmalate and 3-isopropylmalate, via the formation of 2-isopropylmaleate. The protein is 3-isopropylmalate dehydratase small subunit of Methylorubrum populi (strain ATCC BAA-705 / NCIMB 13946 / BJ001) (Methylobacterium populi).